A 604-amino-acid polypeptide reads, in one-letter code: uncharacterized protein (604 aa).

Positions 45-329 (LPLSFLTVLI…LGQVYNQLLM (285 aa)) constitute an ABC transmembrane type-1 domain. 6 consecutive transmembrane segments (helical) span residues 49–69 (FLTV…IGVY), 82–102 (LLIQ…AANV), 162–182 (VINL…LFTL), 184–204 (PELT…STSL), 273–293 (LVEM…ATLI), and 297–317 (TITI…WEPI). Positions 363 to 597 (ISFEEVEFSY…GGIYAGLVKA (235 aa)) constitute an ABC transporter domain. Residue 396–403 (GHTGSGKT) coordinates ATP.

Belongs to the ABC transporter superfamily.

The protein localises to the cell membrane. This is an uncharacterized protein from Bacillus subtilis (strain 168).